Reading from the N-terminus, the 548-residue chain is Synaptic vesicle 2-related protein (548 aa).

Topologically, residues 1–87 (MEEDLFQLRQ…GFGRFQWKLS (87 aa)) are cytoplasmic. A phosphoserine mark is found at S25 and S31. A helical transmembrane segment spans residues 88-108 (VLTGLAWMADAMEMMILSILA). Topologically, residues 109–122 (PQLHCEWRLPSWQV) are vesicular. A helical transmembrane segment spans residues 123–143 (ALLTSVVFIGMMSSSTLWGNI). Residues 144–156 (SDQYGRKTGLKIS) are Cytoplasmic-facing. Residues 157 to 177 (VFWTLYYGILSAFAPVYSWIL) traverse the membrane as a helical segment. The Vesicular portion of the chain corresponds to 178–180 (VLR). The chain crosses the membrane as a helical span at residues 181 to 201 (GLVGFGIGGVPQSVTLYAEFL). The Cytoplasmic segment spans residues 202–209 (PMKARAKC). A helical membrane pass occupies residues 210–230 (ILLIEVFWAIGTVFEVLLAVF). Topologically, residues 231–238 (VMPSLGWR) are vesicular. Residues 239 to 259 (WLLLLSAAPLLVFAVLCFWLP) form a helical membrane-spanning segment. At 260–316 (ESARYDVLSGNQEKAIATLKRIATENGAPMPLGKLIISRQEDRGKMRDLFTPHFRWT) the chain is on the cytoplasmic side. Residues 317–337 (TLLLWFIWFSNAFSYYGLVLL) traverse the membrane as a helical segment. At 338 to 373 (TTELFQAGDVCSISSRKKAVEAKCSLACEYLSKEDY) the chain is on the vesicular side. A helical transmembrane segment spans residues 374 to 394 (MDLLWTTLSEFPGVLVTLWVI). The Cytoplasmic portion of the chain corresponds to 395-401 (DRLGRKK). Residues 402–422 (TMALCFVIFSLCSLLLFICIG) traverse the membrane as a helical segment. Residues 423-424 (RN) are Vesicular-facing. Residues 425–445 (VLTLLLFIARAFISGGFQAAY) form a helical membrane-spanning segment. Topologically, residues 446-457 (VYTPEVYPTATR) are cytoplasmic. A helical membrane pass occupies residues 458 to 478 (ALGLGTCSGMARVGALITPFI). At 479-489 (AQVMLESSVYL) the chain is on the vesicular side. The helical transmembrane segment at 490–510 (TLAVYSGCCLLAALASCFLPI) threads the bilayer. Topologically, residues 511-548 (ETKGRALQESSHREWGQEMVGRGTNSTGVPRSNSGSQE) are cytoplasmic. A disordered region spans residues 523–548 (REWGQEMVGRGTNSTGVPRSNSGSQE). A compositionally biased stretch (polar residues) spans 533–548 (GTNSTGVPRSNSGSQE). Position 542 is a phosphoserine (S542).

The protein belongs to the major facilitator superfamily. In terms of tissue distribution, detected in brain (at protein level). Detected in brain, in synaptic layers of the cerebellum, hippocampus and cerebral cortex.

It localises to the cytoplasmic vesicle. It is found in the secretory vesicle. Its subcellular location is the synaptic vesicle membrane. The sequence is that of Synaptic vesicle 2-related protein (Svop) from Rattus norvegicus (Rat).